A 448-amino-acid chain; its full sequence is Asparagine--tRNA ligase (448 aa).

This sequence belongs to the class-II aminoacyl-tRNA synthetase family. As to quaternary structure, homodimer.

It is found in the cytoplasm. The catalysed reaction is tRNA(Asn) + L-asparagine + ATP = L-asparaginyl-tRNA(Asn) + AMP + diphosphate + H(+). This chain is Asparagine--tRNA ligase, found in Streptococcus suis (strain 98HAH33).